We begin with the raw amino-acid sequence, 726 residues long: Catalase-peroxidase (726 aa).

The disordered stretch occupies residues 1–33; that stretch reads MSTSDDIHNTTATGKCPFHQGGHDQSAGGGTTT. Positions 105-226 form a cross-link, tryptophyl-tyrosyl-methioninium (Trp-Tyr) (with M-252); that stretch reads WHGAGTYRSI…LGATEMGLIY (122 aa). Catalysis depends on His-106, which acts as the Proton acceptor. Residues 226–252 constitute a cross-link (tryptophyl-tyrosyl-methioninium (Tyr-Met) (with W-105)); the sequence is YVNPEGPDHSGEPLSAAAAIRATFGNM. His-267 lines the heme b pocket.

The protein belongs to the peroxidase family. Peroxidase/catalase subfamily. Homodimer or homotetramer. Requires heme b as cofactor. Post-translationally, formation of the three residue Trp-Tyr-Met cross-link is important for the catalase, but not the peroxidase activity of the enzyme.

It carries out the reaction H2O2 + AH2 = A + 2 H2O. The enzyme catalyses 2 H2O2 = O2 + 2 H2O. Functionally, bifunctional enzyme with both catalase and broad-spectrum peroxidase activity. The chain is Catalase-peroxidase from Escherichia coli O1:K1 / APEC.